Here is a 189-residue protein sequence, read N- to C-terminus: Transcription factor FapR (189 aa).

This sequence belongs to the FapR family.

Transcriptional factor involved in regulation of membrane lipid biosynthesis by repressing genes involved in fatty acid and phospholipid metabolism. This Listeria monocytogenes serotype 4a (strain HCC23) protein is Transcription factor FapR.